The following is a 237-amino-acid chain: NAD(P)H-quinone oxidoreductase subunit K (237 aa).

Positions 52, 53, 117, and 148 each coordinate [4Fe-4S] cluster.

The protein belongs to the complex I 20 kDa subunit family. As to quaternary structure, NDH-1 can be composed of about 15 different subunits; different subcomplexes with different compositions have been identified which probably have different functions. Requires [4Fe-4S] cluster as cofactor.

The protein localises to the cellular thylakoid membrane. It carries out the reaction a plastoquinone + NADH + (n+1) H(+)(in) = a plastoquinol + NAD(+) + n H(+)(out). The catalysed reaction is a plastoquinone + NADPH + (n+1) H(+)(in) = a plastoquinol + NADP(+) + n H(+)(out). In terms of biological role, NDH-1 shuttles electrons from an unknown electron donor, via FMN and iron-sulfur (Fe-S) centers, to quinones in the respiratory and/or the photosynthetic chain. The immediate electron acceptor for the enzyme in this species is believed to be plastoquinone. Couples the redox reaction to proton translocation, and thus conserves the redox energy in a proton gradient. Cyanobacterial NDH-1 also plays a role in inorganic carbon-concentration. This is NAD(P)H-quinone oxidoreductase subunit K from Thermosynechococcus vestitus (strain NIES-2133 / IAM M-273 / BP-1).